The primary structure comprises 516 residues: Putative F-box and FNIP repeat-containing protein L414 (516 aa).

In terms of domain architecture, F-box spans 4-49 (INDLNMDVILHLLTFLTDKNKLNFMMTCTHLYQFISCVKYNNFQLF). FNIP repeat units lie at residues 123-165 (FNHT…FGEN), 166-208 (FNKM…LMYS), 341-383 (YNPK…NFNG), 385-428 (YDNI…FGKL), and 429-470 (YNKP…FGYM).

The sequence is that of Putative F-box and FNIP repeat-containing protein L414 from Acanthamoeba polyphaga (Amoeba).